We begin with the raw amino-acid sequence, 1882 residues long: uncharacterized protein (1882 aa).

A helical transmembrane segment spans residues 16–36 (FFLLFGIIFVLFSIIFLETSI). 4 disordered regions span residues 103–129 (DFGS…DVND), 220–306 (FPGD…ESET), 492–513 (VALA…VKDP), and 658–698 (QTDE…TKST). Basic and acidic residues predominate over residues 221 to 239 (PGDKGKGEDKKTTKKKSEI). Over residues 240–249 (KQASSATTVL) the composition is skewed to polar residues. Composition is skewed to basic and acidic residues over residues 259-275 (TDAK…KDSN), 284-294 (NKDKVWFKSDE), and 500-511 (DKQESSADDGVK). Positions 667 to 698 (AKTTQGTTDSLTQLADASSSSSSSSTGDTKST) are enriched in low complexity. The next 4 helical transmembrane spans lie at 987–1007 (ASVV…ILLI), 1037–1057 (VFAG…AFLL), 1080–1100 (WISF…ISWI), and 1154–1174 (LFTY…AGTI). 2 disordered regions span residues 1233–1253 (DQIQ…EHPY) and 1572–1598 (KDGQ…TSST). Residues 1234 to 1245 (QIQQQQQQQQQQ) show a composition bias toward low complexity. Gly residues predominate over residues 1583-1594 (TSSGGGSCGGGS). 4 helical membrane passes run 1759-1779 (FLLG…GISM), 1807-1827 (FFIP…AGLL), 1828-1848 (VGVQ…VFEF), and 1851-1871 (YMVG…YFWI).

It belongs to the ABC-4 integral membrane protein family.

It localises to the cell membrane. This is an uncharacterized protein from Mycoplasma pneumoniae (strain ATCC 29342 / M129 / Subtype 1) (Mycoplasmoides pneumoniae).